Reading from the N-terminus, the 197-residue chain is Holliday junction branch migration complex subunit RuvA (197 aa).

Residues 1–63 (MYDYIKGNLT…EDAHLLYGFH (63 aa)) are domain I. Residues 64 to 142 (TEDEKAVFLN…DINEVSTDKS (79 aa)) are domain II. Residues 143-147 (KVSTI) form a flexible linker region. Positions 148–197 (NNNQELEEAVEALLALGYKTNELKKIEKFFEGTTDTAENYIKSALKMLMK) are domain III.

It belongs to the RuvA family. As to quaternary structure, homotetramer. Forms an RuvA(8)-RuvB(12)-Holliday junction (HJ) complex. HJ DNA is sandwiched between 2 RuvA tetramers; dsDNA enters through RuvA and exits via RuvB. An RuvB hexamer assembles on each DNA strand where it exits the tetramer. Each RuvB hexamer is contacted by two RuvA subunits (via domain III) on 2 adjacent RuvB subunits; this complex drives branch migration. In the full resolvosome a probable DNA-RuvA(4)-RuvB(12)-RuvC(2) complex forms which resolves the HJ.

The protein localises to the cytoplasm. The RuvA-RuvB-RuvC complex processes Holliday junction (HJ) DNA during genetic recombination and DNA repair, while the RuvA-RuvB complex plays an important role in the rescue of blocked DNA replication forks via replication fork reversal (RFR). RuvA specifically binds to HJ cruciform DNA, conferring on it an open structure. The RuvB hexamer acts as an ATP-dependent pump, pulling dsDNA into and through the RuvAB complex. HJ branch migration allows RuvC to scan DNA until it finds its consensus sequence, where it cleaves and resolves the cruciform DNA. The sequence is that of Holliday junction branch migration complex subunit RuvA from Streptococcus mutans serotype c (strain ATCC 700610 / UA159).